Here is a 504-residue protein sequence, read N- to C-terminus: Tegument protein VP16 homolog (504 aa).

Disordered stretches follow at residues 354–381, 395–421, and 435–486; these read EAGG…RLQR, ATPR…QGRR, and RSGP…ANPF. The segment covering 361 to 378 has biased composition (low complexity); that stretch reads RSGSTRTRGRAARSTTGR. Residues 447–460 are compositionally biased toward low complexity; the sequence is PVRSGLGLSRARGS.

Belongs to the herpesviridae tegument protein VP16 protein family. In terms of assembly, associates with the VP16-induced complex; binding to host HCFC1 activates VP16 for association with the octamer motif-binding host protein POU2F1, to form a multiprotein-DNA complex responsible for activating transcription of the viral immediate early genes.

It localises to the virion tegument. It is found in the host nucleus. Functionally, transcriptional activator of immediate-early (IE) gene products (alpha genes). Acts as a key activator of lytic infection by initiating the lytic program through the assembly of the transcriptional regulatory VP16-induced complex composed of VP16 and two cellular factors, HCFC1 and POU2F1. VP16-induced complex represents a regulatory switch: when it is on, it promotes IE-gene expression and thus lytic infection, and when it is off, it limits IE-gene transcription favoring latent infection. May play a role in the aggregation of tegument proteins around nucleocapsids during virus morphogenesis. The chain is Tegument protein VP16 homolog from Bos taurus (Bovine).